Here is a 332-residue protein sequence, read N- to C-terminus: Adenosine deaminase (332 aa).

Zn(2+) contacts are provided by H12 and H14. Substrate contacts are provided by H14, D16, and G169. H196 serves as a coordination point for Zn(2+). Catalysis depends on E199, which acts as the Proton donor. D277 is a Zn(2+) binding site.

Belongs to the metallo-dependent hydrolases superfamily. Adenosine and AMP deaminases family. Adenosine deaminase subfamily. Zn(2+) serves as cofactor.

It carries out the reaction adenosine + H2O + H(+) = inosine + NH4(+). The catalysed reaction is 2'-deoxyadenosine + H2O + H(+) = 2'-deoxyinosine + NH4(+). Its function is as follows. Catalyzes the hydrolytic deamination of adenosine and 2-deoxyadenosine. In Vibrio atlanticus (strain LGP32) (Vibrio splendidus (strain Mel32)), this protein is Adenosine deaminase.